Consider the following 250-residue polypeptide: Virulence plasmid protein pGP6-D-related protein (250 aa).

The protein belongs to the UPF0137 (pGP6-D) family.

The chain is Virulence plasmid protein pGP6-D-related protein from Chlamydia pneumoniae (Chlamydophila pneumoniae).